The following is a 421-amino-acid chain: Alpha-1-antitrypsin (421 aa).

A signal peptide spans 1 to 24 (MASSSTWGLLLLAGLCCLVPISLA). Residues Asn73 and Asn110 are each glycosylated (N-linked (GlcNAc...) asparagine). The interval 376–395 (GATILEAIPMSIPPNVKFNK) is RCL. Ser386 carries the post-translational modification Phosphoserine.

This sequence belongs to the serpin family. As to quaternary structure, interacts with CELA2A. Interacts with ERGIC3 and LMAN1/ERGIC53. Interacts with PRSS1/Trypsin.

The protein localises to the secreted. In terms of biological role, inhibitor of serine proteases. Its primary target is elastase, but it also has a moderate affinity for plasmin and thrombin. The sequence is that of Alpha-1-antitrypsin (SERPINA1) from Sus scrofa (Pig).